A 699-amino-acid polypeptide reads, in one-letter code: Glycine--tRNA ligase beta subunit (699 aa).

It belongs to the class-II aminoacyl-tRNA synthetase family. In terms of assembly, tetramer of two alpha and two beta subunits.

Its subcellular location is the cytoplasm. The enzyme catalyses tRNA(Gly) + glycine + ATP = glycyl-tRNA(Gly) + AMP + diphosphate. The polypeptide is Glycine--tRNA ligase beta subunit (Methylobacterium radiotolerans (strain ATCC 27329 / DSM 1819 / JCM 2831 / NBRC 15690 / NCIMB 10815 / 0-1)).